A 1683-amino-acid chain; its full sequence is E3 ubiquitin-protein ligase SHPRH (1683 aa).

A disordered region spans residues 1–43; it reads MSSRRKRAPPVRVDEEKRQQLHWNMHEDRRNEPIIISDDDEQP. Residues 12–32 show a composition bias toward basic and acidic residues; sequence RVDEEKRQQLHWNMHEDRRNE. A Phosphoserine modification is found at serine 266. Positions 307-389 constitute a Helicase ATP-binding; first part domain; sequence YQREAVNWML…TVEVLALILT (83 aa). 373–380 provides a ligand contact to ATP; sequence DEMGLGKT. In terms of domain architecture, H15 spans 438–512; that stretch reads QCPPTRVMIL…GFSGTFTLGK (75 aa). The interval 525 to 607 is disordered; the sequence is KQAVGSPRKI…QGHCPATSDS (83 aa). The span at 534–547 shows a compositional bias: basic and acidic residues; the sequence is IQKETRKSGNKDTD. The span at 568 to 588 shows a compositional bias: basic residues; the sequence is KSRRNRSKLRKKLVPSTKKGK. Serine 635 is subject to Phosphoserine. A PHD-type zinc finger spans residues 658–709; sequence RFECICGELDQIDRKPRVQCLKCHLWQHAKCVNYDEKNLKIKPFYCPHCLVA. The 159-residue stretch at 710-868 folds into the Helicase ATP-binding; second part domain; sequence MEPVSTRATL…FGLVVFLGIE (159 aa). The DEAQ box motif lies at 819-822; the sequence is DEAQ. The segment at 1432-1479 adopts an RING-type zinc-finger fold; sequence CPICARQLGKQWAVLTCGHCFCNECISIIIEQYSVGSHRSSIKCAICR. Positions 1514 to 1672 constitute a Helicase C-terminal domain; that stretch reads AVVRTLMKIQ…ASVLTVADLA (159 aa).

The protein belongs to the SNF2/RAD54 helicase family. As to quaternary structure, homodimer. Interacts with HLTF, PCNA, UBE2N and RAD18. Broadly expressed.

It carries out the reaction S-ubiquitinyl-[E2 ubiquitin-conjugating enzyme]-L-cysteine + [acceptor protein]-L-lysine = [E2 ubiquitin-conjugating enzyme]-L-cysteine + N(6)-ubiquitinyl-[acceptor protein]-L-lysine.. It participates in protein modification; protein ubiquitination. Its function is as follows. E3 ubiquitin-protein ligase involved in DNA repair. Upon genotoxic stress, accepts ubiquitin from the UBE2N-UBE2V2 E2 complex and transfers it to 'Lys-164' of PCNA which had been monoubiquitinated by UBE2A/B-RAD18, promoting the formation of non-canonical poly-ubiquitin chains linked through 'Lys-63'. This Homo sapiens (Human) protein is E3 ubiquitin-protein ligase SHPRH (SHPRH).